Reading from the N-terminus, the 141-residue chain is Nucleoside diphosphate kinase (141 aa).

ATP is bound by residues Lys11, Phe59, Arg87, Thr93, Arg104, and Asn114. Residue His117 is the Pros-phosphohistidine intermediate of the active site.

It belongs to the NDK family. In terms of assembly, homotetramer. Requires Mg(2+) as cofactor.

It is found in the cytoplasm. The enzyme catalyses a 2'-deoxyribonucleoside 5'-diphosphate + ATP = a 2'-deoxyribonucleoside 5'-triphosphate + ADP. The catalysed reaction is a ribonucleoside 5'-diphosphate + ATP = a ribonucleoside 5'-triphosphate + ADP. In terms of biological role, major role in the synthesis of nucleoside triphosphates other than ATP. The ATP gamma phosphate is transferred to the NDP beta phosphate via a ping-pong mechanism, using a phosphorylated active-site intermediate. This is Nucleoside diphosphate kinase from Neisseria gonorrhoeae (strain NCCP11945).